Here is a 78-residue protein sequence, read N- to C-terminus: DNA-directed RNA polymerase subunit omega (78 aa).

The protein belongs to the RNA polymerase subunit omega family. In terms of assembly, in cyanobacteria the RNAP catalytic core is composed of 2 alpha, 1 beta, 1 beta', 1 gamma and 1 omega subunit. When a sigma factor is associated with the core the holoenzyme is formed, which can initiate transcription.

It carries out the reaction RNA(n) + a ribonucleoside 5'-triphosphate = RNA(n+1) + diphosphate. Promotes RNA polymerase assembly. Latches the N- and C-terminal regions of the beta' subunit thereby facilitating its interaction with the beta and alpha subunits. The chain is DNA-directed RNA polymerase subunit omega from Prochlorococcus marinus subsp. pastoris (strain CCMP1986 / NIES-2087 / MED4).